Here is a 201-residue protein sequence, read N- to C-terminus: Ribosome maturation factor RimP (201 aa).

It belongs to the RimP family.

It localises to the cytoplasm. Its function is as follows. Required for maturation of 30S ribosomal subunits. The chain is Ribosome maturation factor RimP from Acidiphilium cryptum (strain JF-5).